The sequence spans 231 residues: uncharacterized protein (231 aa).

The segment at 43-76 adopts an SWIM-type zinc-finger fold; it reads YKVKVDLDNNYFGLCTCQYKYNCKHAYALIEAYE.

This is an uncharacterized protein from Methanocaldococcus jannaschii (strain ATCC 43067 / DSM 2661 / JAL-1 / JCM 10045 / NBRC 100440) (Methanococcus jannaschii).